We begin with the raw amino-acid sequence, 88 residues long: Small ribosomal subunit protein bS20 (88 aa).

The protein belongs to the bacterial ribosomal protein bS20 family.

Its function is as follows. Binds directly to 16S ribosomal RNA. This Coprothermobacter proteolyticus (strain ATCC 35245 / DSM 5265 / OCM 4 / BT) protein is Small ribosomal subunit protein bS20.